The primary structure comprises 243 residues: Membrane selenoprotein (243 aa).

Residues 12 to 63 form a disordered region; sequence GEDCEGGVUARPSSSSSSINNASDESTPLISKTNDEEKANIGISSTSNSPQE. Residue Sec20 is a non-standard amino acid, selenocysteine. Polar residues-rich tracts occupy residues 30–43 and 53–63; these read INNASDESTPLISK and GISSTSNSPQE. The next 4 helical transmembrane spans lie at 74–94, 102–122, 144–164, and 199–219; these read ILTLLISIPALVGSUCWPVLI, VSAGSVELAHSLTFAITLSIL, IKFGPFYLTAIAVPLATFDIL, and VMGWFSAIVFTYTGYACLLVG. A non-standard amino acid (selenocysteine) is located at residue Sec88.

The protein localises to the membrane. The chain is Membrane selenoprotein (msp) from Dictyostelium discoideum (Social amoeba).